Consider the following 210-residue polypeptide: Probable nicotinate-nucleotide adenylyltransferase (210 aa).

Belongs to the NadD family.

It carries out the reaction nicotinate beta-D-ribonucleotide + ATP + H(+) = deamido-NAD(+) + diphosphate. The protein operates within cofactor biosynthesis; NAD(+) biosynthesis; deamido-NAD(+) from nicotinate D-ribonucleotide: step 1/1. Catalyzes the reversible adenylation of nicotinate mononucleotide (NaMN) to nicotinic acid adenine dinucleotide (NaAD). The protein is Probable nicotinate-nucleotide adenylyltransferase of Streptococcus pyogenes serotype M6 (strain ATCC BAA-946 / MGAS10394).